We begin with the raw amino-acid sequence, 257 residues long: Imidazole glycerol phosphate synthase subunit HisF (257 aa).

Catalysis depends on residues D11 and D130.

It belongs to the HisA/HisF family. In terms of assembly, heterodimer of HisH and HisF.

Its subcellular location is the cytoplasm. It carries out the reaction 5-[(5-phospho-1-deoxy-D-ribulos-1-ylimino)methylamino]-1-(5-phospho-beta-D-ribosyl)imidazole-4-carboxamide + L-glutamine = D-erythro-1-(imidazol-4-yl)glycerol 3-phosphate + 5-amino-1-(5-phospho-beta-D-ribosyl)imidazole-4-carboxamide + L-glutamate + H(+). Its pathway is amino-acid biosynthesis; L-histidine biosynthesis; L-histidine from 5-phospho-alpha-D-ribose 1-diphosphate: step 5/9. Functionally, IGPS catalyzes the conversion of PRFAR and glutamine to IGP, AICAR and glutamate. The HisF subunit catalyzes the cyclization activity that produces IGP and AICAR from PRFAR using the ammonia provided by the HisH subunit. In Aliivibrio fischeri (strain ATCC 700601 / ES114) (Vibrio fischeri), this protein is Imidazole glycerol phosphate synthase subunit HisF.